A 92-amino-acid polypeptide reads, in one-letter code: Acylphosphatase (92 aa).

An Acylphosphatase-like domain is found at 5–92; it reads RWHLLVSGKV…QEFTDFRTTH (88 aa). Residues arginine 20 and asparagine 38 contribute to the active site.

This sequence belongs to the acylphosphatase family.

It catalyses the reaction an acyl phosphate + H2O = a carboxylate + phosphate + H(+). This is Acylphosphatase (acyP) from Marinobacter nauticus (strain ATCC 700491 / DSM 11845 / VT8) (Marinobacter aquaeolei).